Consider the following 281-residue polypeptide: Fructose-bisphosphate aldolase class 1 (281 aa).

The Schiff-base intermediate with dihydroxyacetone-P role is filled by lysine 191.

It belongs to the DeoC/FbaB aldolase family. In terms of assembly, homooctamer.

The protein localises to the cytoplasm. It carries out the reaction beta-D-fructose 1,6-bisphosphate = D-glyceraldehyde 3-phosphate + dihydroxyacetone phosphate. Its activity is regulated as follows. Activated by citrate. In Pyrococcus abyssi (strain GE5 / Orsay), this protein is Fructose-bisphosphate aldolase class 1 (fba).